The chain runs to 204 residues: Large ribosomal subunit protein eL15 (204 aa).

This sequence belongs to the eukaryotic ribosomal protein eL15 family. In terms of assembly, component of the large ribosomal subunit.

Its subcellular location is the cytoplasm. In terms of biological role, component of the large ribosomal subunit. The ribosome is a large ribonucleoprotein complex responsible for the synthesis of proteins in the cell. The chain is Large ribosomal subunit protein eL15 (rpl15) from Siniperca knerii (Big-eye mandarin fish).